A 100-amino-acid chain; its full sequence is Small ribosomal subunit protein uS14 (100 aa).

The protein belongs to the universal ribosomal protein uS14 family. Part of the 30S ribosomal subunit. Contacts proteins S3 and S10.

In terms of biological role, binds 16S rRNA, required for the assembly of 30S particles and may also be responsible for determining the conformation of the 16S rRNA at the A site. The polypeptide is Small ribosomal subunit protein uS14 (Microcystis aeruginosa (strain NIES-843 / IAM M-2473)).